A 101-amino-acid polypeptide reads, in one-letter code: Integration host factor subunit alpha (101 aa).

It belongs to the bacterial histone-like protein family. In terms of assembly, heterodimer of an alpha and a beta chain.

Its function is as follows. This protein is one of the two subunits of integration host factor, a specific DNA-binding protein that functions in genetic recombination as well as in transcriptional and translational control. The polypeptide is Integration host factor subunit alpha (Alkalilimnicola ehrlichii (strain ATCC BAA-1101 / DSM 17681 / MLHE-1)).